The primary structure comprises 993 residues: Receptor-type tyrosine-protein kinase FLT3 (993 aa).

The first 26 residues, methionine 1–threonine 26, serve as a signal peptide directing secretion. Over asparagine 27–serine 543 the chain is Extracellular. Residues cysteine 35 and cysteine 65 are joined by a disulfide bond. 2 N-linked (GlcNAc...) asparagine glycosylation sites follow: asparagine 43 and asparagine 100. A disulfide bridge connects residues cysteine 103 and cysteine 114. The N-linked (GlcNAc...) asparagine glycan is linked to asparagine 151. 3 disulfides stabilise this stretch: cysteine 199/cysteine 206, cysteine 232/cysteine 241, and cysteine 272/cysteine 330. In terms of domain architecture, Ig-like C2-type spans proline 253 to threonine 343. N-linked (GlcNAc...) asparagine glycosylation is found at asparagine 306, asparagine 323, asparagine 351, and asparagine 354. Intrachain disulfides connect cysteine 368–cysteine 407 and cysteine 381–cysteine 392. N-linked (GlcNAc...) asparagine glycans are attached at residues asparagine 473, asparagine 502, and asparagine 541. A helical membrane pass occupies residues phenylalanine 544 to cysteine 563. The Cytoplasmic portion of the chain corresponds to histidine 564–serine 993. At tyrosine 572 the chain carries Phosphotyrosine. At serine 574 the chain carries Phosphoserine. 3 positions are modified to phosphotyrosine; by autocatalysis: tyrosine 589, tyrosine 591, and tyrosine 599. The segment at tyrosine 591–tyrosine 597 is important for normal regulation of the kinase activity and for maintaining the kinase in an inactive state in the absence of bound ligand. Residues leucine 610–leucine 943 form the Protein kinase domain. ATP-binding positions include leucine 616–valine 624 and lysine 644. Tyrosine 726 carries the post-translational modification Phosphotyrosine; by autocatalysis. Residue serine 759 is modified to Phosphoserine. Tyrosine 768 and tyrosine 793 each carry phosphotyrosine. Catalysis depends on aspartate 811, which acts as the Proton acceptor. Residues tyrosine 842, tyrosine 955, and tyrosine 969 each carry the phosphotyrosine; by autocatalysis modification. Phosphoserine is present on serine 993.

It belongs to the protein kinase superfamily. Tyr protein kinase family. CSF-1/PDGF receptor subfamily. Monomer in the absence of bound FLT3LG. Homodimer in the presence of bound FLT3LG. Interacts with FIZ1 following ligand activation. Interacts with FES, FER, LYN, FGR, HCK, SRC and GRB2. Interacts with PTPRJ/DEP-1 and PTPN11/SHP2. Interacts with RNF115 and RNF126. As to quaternary structure, (Microbial infection) Interacts with human cytomegalovirus protein UL7. N-glycosylated, contains complex N-glycans with sialic acid. Post-translationally, autophosphorylated on several tyrosine residues in response to FLT3LG binding. FLT3LG binding also increases phosphorylation of mutant kinases that are constitutively activated. Dephosphorylated by PTPRJ/DEP-1, PTPN1, PTPN6/SHP-1, and to a lesser degree by PTPN12. Dephosphorylation is important for export from the endoplasmic reticulum and location at the cell membrane. In terms of processing, rapidly ubiquitinated by UBE2L6 and the E3 ubiquitin-protein ligase SIAH1 after autophosphorylation, leading to its proteasomal degradation. Detected in bone marrow, in hematopoietic stem cells, in myeloid progenitor cells and in granulocyte/macrophage progenitor cells (at protein level). Detected in bone marrow, liver, thymus, spleen and lymph node, and at low levels in kidney and pancreas. Highly expressed in T-cell leukemia.

The protein resides in the membrane. It is found in the endoplasmic reticulum lumen. It carries out the reaction L-tyrosyl-[protein] + ATP = O-phospho-L-tyrosyl-[protein] + ADP + H(+). Its activity is regulated as follows. Present in an inactive conformation in the absence of bound ligand. FLT3LG binding leads to dimerization and activation by autophosphorylation. Its function is as follows. Tyrosine-protein kinase that acts as a cell-surface receptor for the cytokine FLT3LG and regulates differentiation, proliferation and survival of hematopoietic progenitor cells and of dendritic cells. Promotes phosphorylation of SHC1 and AKT1, and activation of the downstream effector MTOR. Promotes activation of RAS signaling and phosphorylation of downstream kinases, including MAPK1/ERK2 and/or MAPK3/ERK1. Promotes phosphorylation of FES, FER, PTPN6/SHP, PTPN11/SHP-2, PLCG1, and STAT5A and/or STAT5B. Activation of wild-type FLT3 causes only marginal activation of STAT5A or STAT5B. Mutations that cause constitutive kinase activity promote cell proliferation and resistance to apoptosis via the activation of multiple signaling pathways. This chain is Receptor-type tyrosine-protein kinase FLT3 (FLT3), found in Homo sapiens (Human).